The sequence spans 664 residues: Protein fem-1 homolog CG6966 (664 aa).

ANK repeat units follow at residues 40-70 (NGATPLVISCRNGHYDIVEYLLTKCRANVEQ), 82-111 (EDAPPLWCAAAAGHLGIVKMLVRRGANVNS), 115-144 (TNSTPLRAACFDGHYEIVKYLVHHGADFEV), 148-177 (HGHTCLMIACYKGHFRIAQYLLSLNADVNR), 181-210 (KGNTALHDCAESGSLQILQLLLKHGATMDV), and 213-242 (YGMTPLLAASVTGHMPIVEHLITLPCVSRE). 2 TPR repeats span residues 245 to 279 (IHALELLGATYVDRKRDMAAALNLWRRALEERAVE) and 335 to 368 (SYYIRFRGAHYADAGRFDRCIELWSYALTMQQKI). A disordered region spans residues 433-460 (QQKDQQHPQKQLPAADKSPSCSASSSAS). Positions 450-460 (SPSCSASSSAS) are enriched in low complexity. 2 ANK repeats span residues 529–571 (FDRT…DPNA) and 575–605 (AGNTPLHLATMQPYVEPLSHILLEGGAHLDT).

It belongs to the fem-1 family. As to quaternary structure, component of a CRL2 E3 ubiquitin-protein ligase complex, also named ECS (Elongin BC-CUL2/5-SOCS-box protein) complex.

It functions in the pathway protein modification; protein ubiquitination. Substrate-recognition component of a Cul2-RING (CRL2) E3 ubiquitin-protein ligase complex of the DesCEND (destruction via C-end degrons) pathway, which recognizes a C-degron located at the extreme C terminus of target proteins, leading to their ubiquitination and degradation. The C-degron recognized by the DesCEND pathway is usually a motif of less than ten residues and can be present in full-length proteins, truncated proteins or proteolytically cleaved forms. This chain is Protein fem-1 homolog CG6966, found in Drosophila melanogaster (Fruit fly).